Here is a 438-residue protein sequence, read N- to C-terminus: V-type ATP synthase beta chain (438 aa).

The protein belongs to the ATPase alpha/beta chains family.

In terms of biological role, produces ATP from ADP in the presence of a proton gradient across the membrane. The V-type beta chain is a regulatory subunit. The polypeptide is V-type ATP synthase beta chain (atpB) (Chlamydia trachomatis serovar D (strain ATCC VR-885 / DSM 19411 / UW-3/Cx)).